Consider the following 768-residue polypeptide: Putative calcium up-regulated protein H (768 aa).

The segment at 1-22 (MINIEDISKSSNQSEEKQLKST) is disordered. Ricin B-type lectin domains are found at residues 25 to 145 (KPKY…WTTF) and 116 to 248 (QGNG…WGIN).

The protein belongs to the cup family.

It is found in the cytoplasm. The protein resides in the membrane. In terms of biological role, may play an important role in stabilizing and/or regulating the cell membrane during Ca(2+) stress or certain stages of development. This is Putative calcium up-regulated protein H (cupH) from Dictyostelium discoideum (Social amoeba).